Here is a 143-residue protein sequence, read N- to C-terminus: Zinc-containing ferredoxin (143 aa).

Positions 13–60 (PIDEHFLENDKDYPVTGQHNGHDVRAEGMQRLDADGKPYPTKLGIHGT) are N-terminal extension. Zn(2+) is bound by residues histidine 31, histidine 34, and histidine 58. 4Fe-4S ferredoxin-type domains follow at residues 60 to 89 (THVA…WNLN) and 115 to 143 (KCDP…KITP). Residues cysteine 69 and cysteine 75 each contribute to the [3Fe-4S] cluster site. Cysteine 79 is a binding site for [4Fe-4S] cluster. Aspartate 117 is a binding site for Zn(2+). Residues cysteine 124, cysteine 127, and cysteine 130 each coordinate [4Fe-4S] cluster. Residue cysteine 134 participates in [3Fe-4S] cluster binding.

[3Fe-4S] cluster is required as a cofactor. It depends on [4Fe-4S] cluster as a cofactor. Zn(2+) serves as cofactor.

Functionally, ferredoxins are iron-sulfur proteins that transfer electrons in a wide variety of metabolic reactions. In Thermoplasma acidophilum (strain ATCC 25905 / DSM 1728 / JCM 9062 / NBRC 15155 / AMRC-C165), this protein is Zinc-containing ferredoxin (zfx).